A 68-amino-acid polypeptide reads, in one-letter code: Erythrodihydroneopterin triphosphate synthetase (68 aa).

The residue at position 66 (serine 66) is a Phosphoserine.

The protein is Erythrodihydroneopterin triphosphate synthetase of Cavia porcellus (Guinea pig).